The primary structure comprises 452 residues: Cytoplasmic tRNA 2-thiolation protein 2 (452 aa).

It belongs to the CTU2/NCS2 family.

It localises to the cytoplasm. It participates in tRNA modification; 5-methoxycarbonylmethyl-2-thiouridine-tRNA biosynthesis. Plays a central role in 2-thiolation of mcm(5)S(2)U at tRNA wobble positions of tRNA(Lys), tRNA(Glu) and tRNA(Gln). May act by forming a heterodimer with NCS6 that ligates sulfur from thiocarboxylated URM1 onto the uridine of tRNAs at wobble position. Prior mcm(5) tRNA modification by the elongator complex is required for 2-thiolation. May also be involved in protein urmylation. The protein is Cytoplasmic tRNA 2-thiolation protein 2 of Candida albicans (strain SC5314 / ATCC MYA-2876) (Yeast).